A 120-amino-acid polypeptide reads, in one-letter code: NAD(P)H-quinone oxidoreductase subunit 3, chloroplastic (120 aa).

Helical transmembrane passes span 9 to 29 (IFWA…LISG), 64 to 84 (MFAL…PWAM), and 88 to 108 (VLGV…IVGS).

This sequence belongs to the complex I subunit 3 family. In terms of assembly, NDH is composed of at least 16 different subunits, 5 of which are encoded in the nucleus.

The protein localises to the plastid. The protein resides in the chloroplast thylakoid membrane. The catalysed reaction is a plastoquinone + NADH + (n+1) H(+)(in) = a plastoquinol + NAD(+) + n H(+)(out). It catalyses the reaction a plastoquinone + NADPH + (n+1) H(+)(in) = a plastoquinol + NADP(+) + n H(+)(out). Its function is as follows. NDH shuttles electrons from NAD(P)H:plastoquinone, via FMN and iron-sulfur (Fe-S) centers, to quinones in the photosynthetic chain and possibly in a chloroplast respiratory chain. The immediate electron acceptor for the enzyme in this species is believed to be plastoquinone. Couples the redox reaction to proton translocation, and thus conserves the redox energy in a proton gradient. This is NAD(P)H-quinone oxidoreductase subunit 3, chloroplastic from Illicium oligandrum (Star anise).